A 224-amino-acid chain; its full sequence is PKHD-type hydroxylase KPN78578_12210 (224 aa).

The region spanning 77–176 (TISAPLFNRY…RQASFLWIQS (100 aa)) is the Fe2OG dioxygenase domain. Fe cation contacts are provided by histidine 95, aspartate 97, and histidine 157. Residue arginine 167 participates in 2-oxoglutarate binding.

Requires Fe(2+) as cofactor. L-ascorbate serves as cofactor.

This Klebsiella pneumoniae subsp. pneumoniae (strain ATCC 700721 / MGH 78578) protein is PKHD-type hydroxylase KPN78578_12210.